A 525-amino-acid polypeptide reads, in one-letter code: Putative ankyrin repeat protein FPV228 (525 aa).

9 ANK repeats span residues 39–71 (HPDN…TRDI), 72–122 (LGNT…ACNN), 123–152 (LNQT…KVNI), 156–185 (YGNT…DVNI), 190–226 (YWYS…TRCR), 227–254 (LNTT…DINA), 258–287 (NDNA…DVNM), 291–320 (RGKT…NPNI), and 324–353 (IMNT…DINH).

This chain is Putative ankyrin repeat protein FPV228, found in Fowlpox virus (strain NVSL) (FPV).